The following is a 476-amino-acid chain: Aspartyl/glutamyl-tRNA(Asn/Gln) amidotransferase subunit B (476 aa).

This sequence belongs to the GatB/GatE family. GatB subfamily. As to quaternary structure, heterotrimer of A, B and C subunits.

It catalyses the reaction L-glutamyl-tRNA(Gln) + L-glutamine + ATP + H2O = L-glutaminyl-tRNA(Gln) + L-glutamate + ADP + phosphate + H(+). The enzyme catalyses L-aspartyl-tRNA(Asn) + L-glutamine + ATP + H2O = L-asparaginyl-tRNA(Asn) + L-glutamate + ADP + phosphate + 2 H(+). Functionally, allows the formation of correctly charged Asn-tRNA(Asn) or Gln-tRNA(Gln) through the transamidation of misacylated Asp-tRNA(Asn) or Glu-tRNA(Gln) in organisms which lack either or both of asparaginyl-tRNA or glutaminyl-tRNA synthetases. The reaction takes place in the presence of glutamine and ATP through an activated phospho-Asp-tRNA(Asn) or phospho-Glu-tRNA(Gln). This is Aspartyl/glutamyl-tRNA(Asn/Gln) amidotransferase subunit B from Lactobacillus gasseri (strain ATCC 33323 / DSM 20243 / BCRC 14619 / CIP 102991 / JCM 1131 / KCTC 3163 / NCIMB 11718 / NCTC 13722 / AM63).